We begin with the raw amino-acid sequence, 250 residues long: Triosephosphate isomerase (250 aa).

A substrate-binding site is contributed by 9–11 (NWK). His-95 functions as the Electrophile in the catalytic mechanism. Glu-167 serves as the catalytic Proton acceptor. Residues Gly-173, Ser-213, and 234-235 (GG) contribute to the substrate site.

The protein belongs to the triosephosphate isomerase family. In terms of assembly, homodimer.

It localises to the cytoplasm. The enzyme catalyses D-glyceraldehyde 3-phosphate = dihydroxyacetone phosphate. The protein operates within carbohydrate biosynthesis; gluconeogenesis. It participates in carbohydrate degradation; glycolysis; D-glyceraldehyde 3-phosphate from glycerone phosphate: step 1/1. In terms of biological role, involved in the gluconeogenesis. Catalyzes stereospecifically the conversion of dihydroxyacetone phosphate (DHAP) to D-glyceraldehyde-3-phosphate (G3P). This is Triosephosphate isomerase from Chloroflexus aurantiacus (strain ATCC 29366 / DSM 635 / J-10-fl).